Reading from the N-terminus, the 316-residue chain is 4-hydroxy-3-methylbut-2-enyl diphosphate reductase (316 aa).

[4Fe-4S] cluster is bound at residue Cys12. (2E)-4-hydroxy-3-methylbut-2-enyl diphosphate is bound by residues His41 and His74. Positions 41 and 74 each coordinate dimethylallyl diphosphate. Isopentenyl diphosphate-binding residues include His41 and His74. Residue Cys96 coordinates [4Fe-4S] cluster. His124 is a (2E)-4-hydroxy-3-methylbut-2-enyl diphosphate binding site. His124 contributes to the dimethylallyl diphosphate binding site. His124 is an isopentenyl diphosphate binding site. Catalysis depends on Glu126, which acts as the Proton donor. Thr167 provides a ligand contact to (2E)-4-hydroxy-3-methylbut-2-enyl diphosphate. Position 197 (Cys197) interacts with [4Fe-4S] cluster. Residues Ser225, Ser226, Asn227, and Ser269 each coordinate (2E)-4-hydroxy-3-methylbut-2-enyl diphosphate. Residues Ser225, Ser226, Asn227, and Ser269 each coordinate dimethylallyl diphosphate. Isopentenyl diphosphate-binding residues include Ser225, Ser226, Asn227, and Ser269.

The protein belongs to the IspH family. Homodimer. [4Fe-4S] cluster is required as a cofactor.

It carries out the reaction isopentenyl diphosphate + 2 oxidized [2Fe-2S]-[ferredoxin] + H2O = (2E)-4-hydroxy-3-methylbut-2-enyl diphosphate + 2 reduced [2Fe-2S]-[ferredoxin] + 2 H(+). The catalysed reaction is dimethylallyl diphosphate + 2 oxidized [2Fe-2S]-[ferredoxin] + H2O = (2E)-4-hydroxy-3-methylbut-2-enyl diphosphate + 2 reduced [2Fe-2S]-[ferredoxin] + 2 H(+). The protein operates within isoprenoid biosynthesis; dimethylallyl diphosphate biosynthesis; dimethylallyl diphosphate from (2E)-4-hydroxy-3-methylbutenyl diphosphate: step 1/1. It functions in the pathway isoprenoid biosynthesis; isopentenyl diphosphate biosynthesis via DXP pathway; isopentenyl diphosphate from 1-deoxy-D-xylulose 5-phosphate: step 6/6. Catalyzes the conversion of 1-hydroxy-2-methyl-2-(E)-butenyl 4-diphosphate (HMBPP) into a mixture of isopentenyl diphosphate (IPP) and dimethylallyl diphosphate (DMAPP). Acts in the terminal step of the DOXP/MEP pathway for isoprenoid precursor biosynthesis. The polypeptide is 4-hydroxy-3-methylbut-2-enyl diphosphate reductase (Salmonella paratyphi A (strain ATCC 9150 / SARB42)).